An 852-amino-acid chain; its full sequence is MSSVNPIQIPSRLPLLLTHESVLLPGSTMRTSVDTARNLQLVRSRLLKGTSLQSTILGVIPNTPDPASDSQDLPPLHRIGTAALAVQVVGSNWPKPHYTLLITGLCRFQIVQVLKEKPYPVAEVEQLDRLEEFPNTCKTREELGELSEQFYRYSVQLVEMLDMSVPAVAKLRRLLDSLPREALPDILTSIIRTSNKEKLQILDAVSLEDRFKMTIPLLVRQIEGLKLLQKTRKPKQDDDKRVIAIRPIRRITHIPGALEDEEEEEDNDDIVMLEKKIRTSSMPEQAHKVCVKEIKRLKKMPQSMPEYALTRNYLELMVELPWNKSTTDRLDIRAARILLDNDHYAMEKLKRRVLEYLAVRQLKNNLKGPILCFVGPPGVGKTSVGRSVAKTLGREFHRIALGGVCDQSDIRGHRRTYVGSMPGRIINGLKTVGVNNPVFLLDEVDKLGKSLQGDPAAALLEVLDPEQNHNFTDHYLNVAFDLSQVLFIATANTTATIPPALLDRMEIIQVPGYTQEEKIEIAHRHLIPKQLEQHGLTPQQIQIPQLTTLAIITRYTREAGVRSLDRKFGAICRAVAVKVAEGQHKEAKLDRSDVADGEGCKEHVLEDAKPESIGDAADLALPPEMPILIDSHALKDILGPPLYELEVSERLSQPGVAIGLAWTPLGGKIMFVEASRMDGEGQLTLTGQLGDVMKESAHLAISWLRSNAKKYHLTNAFGSFDLLDNTDIHLHFPAGAVTKDGPSAGVTIVTCLASLFSGRLVRSDVAMTGEITLRGLVLPVGGIKDKVLAAHRAGLKHIIIPQRNEKDLEEIPSNVKQDLSFVTASCLDEVLNAAFDGGFTVKTRPGLTDSKL.

N-acetylserine is present on Ser2. One can recognise a Lon N-terminal domain in the interval Leu13–Ile222. Gly375 to Thr382 provides a ligand contact to ATP. The Lon proteolytic domain maps to Leu651–Gly837. Residues Ser743 and Lys786 contribute to the active site. Residues Ser850–Leu852 carry the Microbody targeting signal motif.

The protein belongs to the peptidase S16 family. Interacts with PEX5. Interacts with TYSND1. May interact with enzymes involved in beta-oxidation of fatty acids, including ACOX1/AOX.

It localises to the peroxisome matrix. The enzyme catalyses Hydrolysis of proteins in presence of ATP.. Its function is as follows. ATP-dependent serine protease that mediates the selective degradation of misfolded and unassembled polypeptides in the peroxisomal matrix. Necessary for type 2 peroxisome targeting signal (PTS2)-containing protein processing and facilitates peroxisome matrix protein import. May indirectly regulate peroxisomal fatty acid beta-oxidation through degradation of the self-processed forms of TYSND1. The sequence is that of Lon protease homolog 2, peroxisomal (Lonp2) from Rattus norvegicus (Rat).